The following is a 357-amino-acid chain: 3-isopropylmalate dehydrogenase (357 aa).

NAD(+) is bound at residue 76–89; that stretch reads GPQWDTIDPALRPE. R96, R106, R134, and D224 together coordinate substrate. Mg(2+) is bound by residues D224, D248, and D252. 282-294 lines the NAD(+) pocket; it reads GSAPDIAGQGVAN.

This sequence belongs to the isocitrate and isopropylmalate dehydrogenases family. LeuB type 1 subfamily. As to quaternary structure, homodimer. It depends on Mg(2+) as a cofactor. The cofactor is Mn(2+).

It is found in the cytoplasm. It catalyses the reaction (2R,3S)-3-isopropylmalate + NAD(+) = 4-methyl-2-oxopentanoate + CO2 + NADH. Its pathway is amino-acid biosynthesis; L-leucine biosynthesis; L-leucine from 3-methyl-2-oxobutanoate: step 3/4. Its function is as follows. Catalyzes the oxidation of 3-carboxy-2-hydroxy-4-methylpentanoate (3-isopropylmalate) to 3-carboxy-4-methyl-2-oxopentanoate. The product decarboxylates to 4-methyl-2 oxopentanoate. The sequence is that of 3-isopropylmalate dehydrogenase from Xylella fastidiosa (strain Temecula1 / ATCC 700964).